A 169-amino-acid polypeptide reads, in one-letter code: ATP synthase subunit b (169 aa).

A helical membrane pass occupies residues 12–32; the sequence is HIYLGNAIWYLLCFAILMLLI.

This sequence belongs to the ATPase B chain family. As to quaternary structure, F-type ATPases have 2 components, F(1) - the catalytic core - and F(0) - the membrane proton channel. F(1) has five subunits: alpha(3), beta(3), gamma(1), delta(1), epsilon(1). F(0) has three main subunits: a(1), b(2) and c(10-14). The alpha and beta chains form an alternating ring which encloses part of the gamma chain. F(1) is attached to F(0) by a central stalk formed by the gamma and epsilon chains, while a peripheral stalk is formed by the delta and b chains.

It localises to the cell membrane. With respect to regulation, increases 2-fold following exposure to low pH. Functionally, f(1)F(0) ATP synthase produces ATP from ADP in the presence of a proton or sodium gradient. F-type ATPases consist of two structural domains, F(1) containing the extramembraneous catalytic core and F(0) containing the membrane proton channel, linked together by a central stalk and a peripheral stalk. During catalysis, ATP synthesis in the catalytic domain of F(1) is coupled via a rotary mechanism of the central stalk subunits to proton translocation. Component of the F(0) channel, it forms part of the peripheral stalk, linking F(1) to F(0). This chain is ATP synthase subunit b, found in Lactobacillus acidophilus (strain ATCC 700396 / NCK56 / N2 / NCFM).